The primary structure comprises 710 residues: Polyribonucleotide nucleotidyltransferase (710 aa).

Residues Asp-487 and Asp-493 each coordinate Mg(2+). One can recognise a KH domain in the interval Pro-554 to Ile-613. The region spanning Gly-623–Lys-691 is the S1 motif domain.

Belongs to the polyribonucleotide nucleotidyltransferase family. The cofactor is Mg(2+).

The protein resides in the cytoplasm. The enzyme catalyses RNA(n+1) + phosphate = RNA(n) + a ribonucleoside 5'-diphosphate. In terms of biological role, involved in mRNA degradation. Catalyzes the phosphorolysis of single-stranded polyribonucleotides processively in the 3'- to 5'-direction. In Bacillus cytotoxicus (strain DSM 22905 / CIP 110041 / 391-98 / NVH 391-98), this protein is Polyribonucleotide nucleotidyltransferase.